We begin with the raw amino-acid sequence, 141 residues long: Hemoglobin subunit alpha (141 aa).

The region spanning 1–141 (VLSPADKTNV…VSTVLTSKYR (141 aa)) is the Globin domain. S3 bears the Phosphoserine mark. K7 is subject to N6-succinyllysine. T8 bears the Phosphothreonine mark. At K11 the chain carries N6-succinyllysine. Residue S35 is modified to Phosphoserine. The residue at position 40 (K40) is an N6-succinyllysine. Phosphoserine is present on S49. Position 58 (H58) interacts with O2. Heme b is bound at residue H87. At S102 the chain carries Phosphoserine. At T108 the chain carries Phosphothreonine. The residue at position 124 (S124) is a Phosphoserine. 2 positions are modified to phosphothreonine: T134 and T137. S138 is modified (phosphoserine).

This sequence belongs to the globin family. Heterotetramer of two alpha chains and two beta chains. As to expression, red blood cells.

Functionally, involved in oxygen transport from the lung to the various peripheral tissues. Its function is as follows. Hemopressin acts as an antagonist peptide of the cannabinoid receptor CNR1. Hemopressin-binding efficiently blocks cannabinoid receptor CNR1 and subsequent signaling. This is Hemoglobin subunit alpha (HBA) from Eulemur fulvus fulvus (Brown lemur).